A 542-amino-acid polypeptide reads, in one-letter code: MVTEVCSMPAASAVKKPFDLRSKMGKWFHHRFPCCKGSGKSNMGTSGDHDDSFMKMLRSKMGKCCHHCFPCCRGSGTSNVGTSGDHDNSFMKTLRSKMGKWCCHCFPCCRGSGKSNVGAWGDYDDSAFMEPRYHVRREDLDKLHRAAWWGKVPRKDLIVMLRDTDMNKRDKQKRTALHLASANGNSEVVQLLLDRRCQLNVLDNKKRTALIKAVQCQEDECVLMLLEHGADQNIPDEYGNTTLHYAVHNEDKLMAKALLLYGADIESKNKCGLTPLLLGVHEQKQQVVKFLIKKKANLNALDRYGRTALILAVCCGSASIVNLLLEQNVDVSSQDLSGQTAREYAVSSHHHVICELLSDYKEKQMLKISSENSNPEQDLKLTSEEESQRLKVSENSQPEKMSQEPEINKDCDREVEEEIKKHGSNPVGLPENLTNGASAGNGDDGLIPQRRSRKPENQQFPDTENEEYHSDEQNDTRKQLSEEQNTGISQDEILTNKQKQIEVAEKKMNSELSLSHKKEEDLLRENSMLQEEIAMLISGDWN.

ANK repeat units follow at residues glutamate 138–lysine 171, glutamine 172–valine 201, lysine 205–isoleucine 234, tyrosine 238–serine 267, cysteine 271–alanine 300, tyrosine 304–serine 333, and serine 337–serine 373. The interval serine 369 to leucine 494 is disordered. Basic and acidic residues-rich tracts occupy residues glutamine 377 to valine 392, methionine 401 to aspartate 412, and glutamate 466 to serine 481. Over residues glutamate 482 to leucine 494 the composition is skewed to polar residues. Residues serine 489–serine 538 are a coiled coil.

It belongs to the POTE family. As to expression, expressed in prostate and testis.

In Homo sapiens (Human), this protein is POTE ankyrin domain family member C (POTEC).